We begin with the raw amino-acid sequence, 231 residues long: Large ribosomal subunit protein uL1 (231 aa).

It belongs to the universal ribosomal protein uL1 family. As to quaternary structure, part of the 50S ribosomal subunit.

Its function is as follows. Binds directly to 23S rRNA. The L1 stalk is quite mobile in the ribosome, and is involved in E site tRNA release. Functionally, protein L1 is also a translational repressor protein, it controls the translation of the L11 operon by binding to its mRNA. In Polaromonas sp. (strain JS666 / ATCC BAA-500), this protein is Large ribosomal subunit protein uL1.